Reading from the N-terminus, the 66-residue chain is Sodium channel alpha-toxin Acra8 (66 aa).

The LCN-type CS-alpha/beta domain maps to 2–64 (RDGYIVDDKN…VPIKEKGRCN (63 aa)). Cystine bridges form between cysteine 12-cysteine 63, cysteine 16-cysteine 36, cysteine 22-cysteine 46, and cysteine 26-cysteine 48. At asparagine 64 the chain carries Asparagine amide. Residues 65–66 (GR) constitute a propeptide that is removed on maturation.

It belongs to the long (4 C-C) scorpion toxin superfamily. Sodium channel inhibitor family. Alpha subfamily. In terms of tissue distribution, expressed by the venom gland.

Its subcellular location is the secreted. In terms of biological role, alpha toxins bind voltage-independently at site-3 of sodium channels (Nav) and inhibit the inactivation of the activated channels, thereby blocking neuronal transmission. The sequence is that of Sodium channel alpha-toxin Acra8 from Androctonus crassicauda (Arabian fat-tailed scorpion).